Consider the following 174-residue polypeptide: UPF0340 protein SH0921 (174 aa).

Belongs to the UPF0340 family.

The chain is UPF0340 protein SH0921 from Staphylococcus haemolyticus (strain JCSC1435).